The chain runs to 240 residues: Ribonuclease 3 (240 aa).

In terms of domain architecture, RNase III spans 13 to 143; it reads DHASLLEALG…LLGAVHLQHG (131 aa). Glu-53 provides a ligand contact to Mg(2+). Residue Asp-57 is part of the active site. Asp-129 and Glu-132 together coordinate Mg(2+). The active site involves Glu-132. Residues 170–238 form the DRBM domain; it reads DWKTSLQELT…AGAAYQALTA (69 aa).

It belongs to the ribonuclease III family. As to quaternary structure, homodimer. Mg(2+) is required as a cofactor.

Its subcellular location is the cytoplasm. It catalyses the reaction Endonucleolytic cleavage to 5'-phosphomonoester.. Functionally, digests double-stranded RNA. Involved in the processing of primary rRNA transcript to yield the immediate precursors to the large and small rRNAs (23S and 16S). Processes some mRNAs, and tRNAs when they are encoded in the rRNA operon. Processes pre-crRNA and tracrRNA of type II CRISPR loci if present in the organism. The protein is Ribonuclease 3 of Nocardia farcinica (strain IFM 10152).